We begin with the raw amino-acid sequence, 465 residues long: Argininosuccinate lyase (465 aa).

This sequence belongs to the lyase 1 family. Argininosuccinate lyase subfamily.

Its subcellular location is the cytoplasm. It catalyses the reaction 2-(N(omega)-L-arginino)succinate = fumarate + L-arginine. Its pathway is amino-acid biosynthesis; L-arginine biosynthesis; L-arginine from L-ornithine and carbamoyl phosphate: step 3/3. The sequence is that of Argininosuccinate lyase from Rhodopseudomonas palustris (strain BisB18).